The sequence spans 216 residues: N-acetyltransferase 9-like protein (216 aa).

Residues 68–215 form the N-acetyltransferase domain; sequence VLLNENDEAK…DHVELELMRT (148 aa).

The protein belongs to the acetyltransferase family. GNAT subfamily.

The protein resides in the cytoplasm. It is found in the nucleus. In Schizosaccharomyces pombe (strain 972 / ATCC 24843) (Fission yeast), this protein is N-acetyltransferase 9-like protein.